Here is a 509-residue protein sequence, read N- to C-terminus: ESX-2 secretion system protein eccD2 (509 aa).

11 helical membrane passes run 135-155 (LTAA…VLAL), 170-190 (AMAG…WWGW), 196-216 (LFSG…ACAP), 222-242 (AAHA…IGVA), 248-268 (QTAV…VAAV), 281-301 (ICVL…ALWV), 364-384 (VQVG…WGVL), 389-409 (PWAW…ITQG), 418-438 (AVAL…KYAL), 449-469 (LWPA…ALVV), and 487-507 (VLAM…FAWL).

It belongs to the EccD/Snm4 family. In terms of assembly, part of the ESX-2 / type VII secretion system (T7SS), which is composed of cytosolic and membrane components.

The protein localises to the cell membrane. The chain is ESX-2 secretion system protein eccD2 (eccD2) from Mycobacterium tuberculosis (strain CDC 1551 / Oshkosh).